Reading from the N-terminus, the 306-residue chain is Homoserine kinase (306 aa).

An ATP-binding site is contributed by 90–100 (PLARGLGSSAS).

The protein belongs to the GHMP kinase family. Homoserine kinase subfamily.

The protein resides in the cytoplasm. The enzyme catalyses L-homoserine + ATP = O-phospho-L-homoserine + ADP + H(+). Its pathway is amino-acid biosynthesis; L-threonine biosynthesis; L-threonine from L-aspartate: step 4/5. Its function is as follows. Catalyzes the ATP-dependent phosphorylation of L-homoserine to L-homoserine phosphate. The chain is Homoserine kinase from Staphylococcus epidermidis (strain ATCC 35984 / DSM 28319 / BCRC 17069 / CCUG 31568 / BM 3577 / RP62A).